Reading from the N-terminus, the 251-residue chain is Triosephosphate isomerase (251 aa).

Residue 9-11 coordinates substrate; sequence NWK. Histidine 93 acts as the Electrophile in catalysis. Glutamate 163 serves as the catalytic Proton acceptor. Residues glycine 169, serine 209, and 230-231 each bind substrate; that span reads GG.

The protein belongs to the triosephosphate isomerase family. Homodimer.

The protein resides in the cytoplasm. The enzyme catalyses D-glyceraldehyde 3-phosphate = dihydroxyacetone phosphate. It functions in the pathway carbohydrate biosynthesis; gluconeogenesis. Its pathway is carbohydrate degradation; glycolysis; D-glyceraldehyde 3-phosphate from glycerone phosphate: step 1/1. In terms of biological role, involved in the gluconeogenesis. Catalyzes stereospecifically the conversion of dihydroxyacetone phosphate (DHAP) to D-glyceraldehyde-3-phosphate (G3P). The protein is Triosephosphate isomerase of Ruegeria pomeroyi (strain ATCC 700808 / DSM 15171 / DSS-3) (Silicibacter pomeroyi).